Consider the following 493-residue polypeptide: MADSEALPSLAGDPVAVEALLRAVFGVVVDEAIQKGTSVSQKVCEWKEPEELKQLLDLELRSQGESQKQILERCRAVIRYSVKTGHPRFFNQLFSGLDPHALAGRIITESLNTSQYTYEIAPVFVLMEEEVLRKLRALVGWSSGDGIFCPGGSISNMYAVNLARYQRYPDCKQRGLRTLPPLALFTSKECHYSIQKGAAFLGLGTDSVRVVKADERGKMVPEDLERQIGMAEAEGAVPFLVSATSGTTVLGAFDPLEAIADVCQRHGLWLHVDAAWGGSVLLSQTHRHLLDGIQRADSVAWNPHKLLAAGLQCSALLLQDTSNLLKRCHGSQASYLFQQDKFYDVALDTGDKVVQCGRRVDCLKLWLMWKAQGDQGLERRIDQAFVLARYLVEEMKKREGFELVMEPEFVNVCFWFVPPSLRGKQESPDYHERLSKVAPVLKERMVKEGSMMIGYQPHGTRGNFFRVVVANSALTCADMDFLLNELERLGQDL.

Lysine 305 carries the N6-(pyridoxal phosphate)lysine modification.

It belongs to the group II decarboxylase family. As to quaternary structure, homodimer. The cofactor is pyridoxal 5'-phosphate. In terms of tissue distribution, expressed in liver and brain. Also expressed in both astrocytes and neurons, but lower levels are expressed in astrocytes.

It carries out the reaction L-aspartate + H(+) = beta-alanine + CO2. The catalysed reaction is 3-sulfino-L-alanine + H(+) = hypotaurine + CO2. It catalyses the reaction L-cysteate + H(+) = taurine + CO2. It participates in organosulfur biosynthesis; taurine biosynthesis; hypotaurine from L-cysteine: step 2/2. In terms of biological role, catalyzes the decarboxylation of L-aspartate, 3-sulfino-L-alanine (cysteine sulfinic acid), and L-cysteate to beta-alanine, hypotaurine and taurine, respectively. The preferred substrate is 3-sulfino-L-alanine. Does not exhibit any decarboxylation activity toward glutamate. This Homo sapiens (Human) protein is Cysteine sulfinic acid decarboxylase (CSAD).